Here is a 437-residue protein sequence, read N- to C-terminus: Ribosomal protein uS12 methylthiotransferase RimO (437 aa).

Residues 5 to 116 (PTIAISHLGC…IVEIVERVET (112 aa)) enclose the MTTase N-terminal domain. Cys-14, Cys-50, Cys-79, Cys-154, Cys-158, and Cys-161 together coordinate [4Fe-4S] cluster. Residues 140 to 369 (TTSEGVAYLR…MLTQQPISER (230 aa)) enclose the Radical SAM core domain. The TRAM domain maps to 372 to 437 (QAYIGQTVDV…DTYDLYGEIV (66 aa)).

It belongs to the methylthiotransferase family. RimO subfamily. [4Fe-4S] cluster serves as cofactor.

The protein resides in the cytoplasm. It catalyses the reaction L-aspartate(89)-[ribosomal protein uS12]-hydrogen + (sulfur carrier)-SH + AH2 + 2 S-adenosyl-L-methionine = 3-methylsulfanyl-L-aspartate(89)-[ribosomal protein uS12]-hydrogen + (sulfur carrier)-H + 5'-deoxyadenosine + L-methionine + A + S-adenosyl-L-homocysteine + 2 H(+). Catalyzes the methylthiolation of an aspartic acid residue of ribosomal protein uS12. The chain is Ribosomal protein uS12 methylthiotransferase RimO from Microcystis aeruginosa (strain NIES-843 / IAM M-2473).